We begin with the raw amino-acid sequence, 122 residues long: Serum amyloid A-1 protein (122 aa).

An N-terminal signal peptide occupies residues 1–19; it reads MKLLSGLLLCSLVLGVSSQ. An important for amyloid formation region spans residues 20-45; sequence RWFSFIGEATQGAWDMWRAYSDMREA. A disordered region spans residues 87–122; the sequence is MGHGAEDSMADQAANEWGRSGKDPNHFRPKGLPDKY. The span at 105-122 shows a compositional bias: basic and acidic residues; that stretch reads RSGKDPNHFRPKGLPDKY.

It belongs to the SAA family. Homohexamer; dimer of trimers. Can form amyloid fibrils after partial proteolysis; the native, undenatured protein does not form amyloid fibrils (in vitro). Apolipoprotein of the HDL complex. Binds to heparin. Detected in liver.

It localises to the secreted. In terms of biological role, major acute phase protein. This chain is Serum amyloid A-1 protein (SAA1), found in Oryctolagus cuniculus (Rabbit).